Here is a 94-residue protein sequence, read N- to C-terminus: MLKLNLQFFASKKGVSSTKNGRDSESKRLGAKRADGQFVTGGSILYRQRGTKIYPGENVGRGGDDTLFAKIDGVVKFERKGRDKKQVSVYAVAE.

Positions 1–9 are excised as a propeptide; it reads MLKLNLQFF.

Belongs to the bacterial ribosomal protein bL27 family. In terms of processing, the N-terminus is cleaved by ribosomal processing cysteine protease Prp.

This Staphylococcus aureus (strain Mu3 / ATCC 700698) protein is Large ribosomal subunit protein bL27.